We begin with the raw amino-acid sequence, 159 residues long: Phosphopantetheine adenylyltransferase (159 aa).

Thr10 is a binding site for substrate. ATP-binding positions include 10–11 and His18; that span reads TF. Substrate is bound by residues Lys42, Met74, and Arg88. ATP-binding positions include 89–91, Glu99, and 124–130; these read GLR and WSFISSS.

Belongs to the bacterial CoaD family. As to quaternary structure, homohexamer. The cofactor is Mg(2+).

Its subcellular location is the cytoplasm. The catalysed reaction is (R)-4'-phosphopantetheine + ATP + H(+) = 3'-dephospho-CoA + diphosphate. It functions in the pathway cofactor biosynthesis; coenzyme A biosynthesis; CoA from (R)-pantothenate: step 4/5. Functionally, reversibly transfers an adenylyl group from ATP to 4'-phosphopantetheine, yielding dephospho-CoA (dPCoA) and pyrophosphate. In Citrobacter koseri (strain ATCC BAA-895 / CDC 4225-83 / SGSC4696), this protein is Phosphopantetheine adenylyltransferase.